We begin with the raw amino-acid sequence, 642 residues long: Polyglycine hydrolase (642 aa).

Positions 1 to 23 (MYTSRLLLSNLASCLSLATLVAS) are cleaved as a signal peptide. N37, N100, N159, and N341 each carry an N-linked (GlcNAc...) asparagine glycan. A disulfide bond links C149 and C183. S370 is an active-site residue. N-linked (GlcNAc...) asparagine glycosylation is found at N390, N407, N444, N487, and N494.

Belongs to the peptidase S12 family.

It localises to the secreted. The enzyme catalyses a glycyl-glycyl-[protein] + H2O = N-terminal glycyl-[protein] + [protein]-C-terminal glycine. With respect to regulation, not inhibited by phenylmethylsulfonyl fluoride (PMSF; serine peptidase class S1 inhibitor), clavulanic acid (beta-lactamase inhibitor) or ampicillin (penicillin-binding protein (PBP) inhibitor). Its function is as follows. Serine-type endopeptidase that cleaves Gly-Gly bonds in the polyglycine linker of host plant class IV chitinases to disrupt their chitin-binding, and thereby plays a role in lowering the defense responses of the host to the fungus. Degrades Z.mays Endochitinase A (CHIA). Degrades Z.mays Endochitinase B (CHIB). Has no activity on Z.mays CHIA following CHIA cleavage by fungalysin. In Epicoccum sorghinum (Endophyte fungus), this protein is Polyglycine hydrolase.